A 95-amino-acid polypeptide reads, in one-letter code: Small ubiquitin-related modifier 4 (95 aa).

The Ubiquitin-like domain occupies 17–95 (HINLKVAGQD…VFQQPTGGVY (79 aa)). Gly93 is covalently cross-linked (Glycyl lysine isopeptide (Gly-Lys) (interchain with K-? in acceptor proteins)). Residues 94-95 (VY) constitute a propeptide that is removed on maturation.

The protein belongs to the ubiquitin family. SUMO subfamily. Interacts with SAE2. Covalently attached to a number of proteins. Post-translationally, in contrast to SUMO1, SUMO2 and SUMO3, seems to be insensitive to sentrin-specific proteases due to the presence of Pro-90. This may impair processing to mature form and conjugation to substrates. In terms of tissue distribution, expressed mainly in adult and embryonic kidney. Expressed at various levels in immune tissues, with the highest expression in the lymph node and spleen.

Its function is as follows. Ubiquitin-like protein which can be covalently attached to target lysines as a monomer. Does not seem to be involved in protein degradation and may modulate protein subcellular localization, stability or activity. Upon oxidative stress, conjugates to various anti-oxidant enzymes, chaperones, and stress defense proteins. May also conjugate to NFKBIA, TFAP2A and FOS, negatively regulating their transcriptional activity, and to NR3C1, positively regulating its transcriptional activity. Covalent attachment to its substrates requires prior activation by the E1 complex SAE1-SAE2 and linkage to the E2 enzyme UBE2I. This chain is Small ubiquitin-related modifier 4 (SUMO4), found in Homo sapiens (Human).